Reading from the N-terminus, the 825-residue chain is Translation initiation factor IF-2 (825 aa).

Basic and acidic residues-rich tracts occupy residues 1–19 (MTKK…DNKK), 35–45 (RKGEKKTEGKR), 70–98 (LLKD…EYKK), and 113–122 (KKVESVEKPA). The segment at 1-239 (MTKKQENETS…TQRKDRPLPE (239 aa)) is disordered. The segment covering 158–169 (PSSSRRPSSRPS) has biased composition (low complexity). Basic residues predominate over residues 181–191 (GRRRKSGKPGR). Residues 194-208 (QNSYADQGRGANSNR) are compositionally biased toward polar residues. Residues 211–220 (QRKRKNKKHQ) are compositionally biased toward basic residues. The 170-residue stretch at 326–495 (VRPPVVTIMG…ILEADMLELK (170 aa)) folds into the tr-type G domain. The interval 335–342 (GHVDHGKT) is G1. Residue 335-342 (GHVDHGKT) participates in GTP binding. The segment at 360 to 364 (GITQN) is G2. The interval 381–384 (DTPG) is G3. Residues 381–385 (DTPGH) and 435–438 (NKMD) contribute to the GTP site. The tract at residues 435–438 (NKMD) is G4. The interval 471-473 (SAK) is G5.

The protein belongs to the TRAFAC class translation factor GTPase superfamily. Classic translation factor GTPase family. IF-2 subfamily.

It localises to the cytoplasm. In terms of biological role, one of the essential components for the initiation of protein synthesis. Protects formylmethionyl-tRNA from spontaneous hydrolysis and promotes its binding to the 30S ribosomal subunits. Also involved in the hydrolysis of GTP during the formation of the 70S ribosomal complex. This Lactobacillus delbrueckii subsp. bulgaricus (strain ATCC 11842 / DSM 20081 / BCRC 10696 / JCM 1002 / NBRC 13953 / NCIMB 11778 / NCTC 12712 / WDCM 00102 / Lb 14) protein is Translation initiation factor IF-2.